Reading from the N-terminus, the 395-residue chain is Succinyl-diaminopimelate desuccinylase (395 aa).

H74 is a binding site for Zn(2+). D76 is an active-site residue. D107 lines the Zn(2+) pocket. The active-site Proton acceptor is E141. 3 residues coordinate Zn(2+): E142, E170, and H368.

This sequence belongs to the peptidase M20A family. DapE subfamily. As to quaternary structure, homodimer. Zn(2+) serves as cofactor. It depends on Co(2+) as a cofactor.

It carries out the reaction N-succinyl-(2S,6S)-2,6-diaminopimelate + H2O = (2S,6S)-2,6-diaminopimelate + succinate. It functions in the pathway amino-acid biosynthesis; L-lysine biosynthesis via DAP pathway; LL-2,6-diaminopimelate from (S)-tetrahydrodipicolinate (succinylase route): step 3/3. Its function is as follows. Catalyzes the hydrolysis of N-succinyl-L,L-diaminopimelic acid (SDAP), forming succinate and LL-2,6-diaminopimelate (DAP), an intermediate involved in the bacterial biosynthesis of lysine and meso-diaminopimelic acid, an essential component of bacterial cell walls. This chain is Succinyl-diaminopimelate desuccinylase, found in Brucella anthropi (strain ATCC 49188 / DSM 6882 / CCUG 24695 / JCM 21032 / LMG 3331 / NBRC 15819 / NCTC 12168 / Alc 37) (Ochrobactrum anthropi).